The primary structure comprises 944 residues: Protein translocase subunit SecA (944 aa).

ATP-binding positions include Gln77, 95–99, and Asp484; that span reads GEGKT. Positions 920-944 are disordered; that stretch reads EQEKQTRKKKKKKPHEDESSKTKIG. Residues 933 to 944 are compositionally biased toward basic and acidic residues; it reads PHEDESSKTKIG.

Belongs to the SecA family. In terms of assembly, monomer and homodimer. Part of the essential Sec protein translocation apparatus which comprises SecA, SecYEG and auxiliary proteins SecDF. Other proteins may also be involved.

Its subcellular location is the cell membrane. It localises to the cytoplasm. It carries out the reaction ATP + H2O + cellular proteinSide 1 = ADP + phosphate + cellular proteinSide 2.. Its function is as follows. Part of the Sec protein translocase complex. Interacts with the SecYEG preprotein conducting channel. Has a central role in coupling the hydrolysis of ATP to the transfer of proteins into and across the cell membrane, serving as an ATP-driven molecular motor driving the stepwise translocation of polypeptide chains across the membrane. This is Protein translocase subunit SecA from Mycoplasma mycoides subsp. mycoides SC (strain CCUG 32753 / NCTC 10114 / PG1).